A 1040-amino-acid chain; its full sequence is Regulator of telomere elongation helicase 1 homolog (1040 aa).

A Helicase ATP-binding domain is found at 52–355 (RGINVEFPFE…KGLLLKLQEL (304 aa)). 87 to 94 (SPTGTGKT) is a binding site for ATP. Residues 117 to 137 (RKNSAIPWSDSDEPLSQSGGG) form a disordered region. [4Fe-4S] cluster contacts are provided by Cys-181, Cys-202, Cys-210, and Cys-246. Positions 289 to 292 (DEAH) match the DEAH box motif. Residues 926-949 (KVPESQGSASSSVLTAKGNGGGDK) form a disordered region. Positions 930–939 (SQGSASSSVL) are enriched in polar residues. The short motif at 992-999 (QSIVQLFC) is the PIP-box; degenerate element.

This sequence belongs to the helicase family. RAD3/XPD subfamily.

The protein resides in the nucleus. The enzyme catalyses ATP + H2O = ADP + phosphate + H(+). In terms of biological role, a probable ATP-dependent DNA helicase implicated in DNA replication, DNA repair and the maintenance of genomic stability. Acts as an anti-recombinase to counteract toxic recombination and limit crossover during meiosis. Regulates meiotic recombination and crossover homeostasis by physically dissociating strand invasion events and thereby promotes noncrossover repair by meiotic synthesis dependent strand annealing (SDSA) as well as disassembly of D loop recombination intermediates. Also plays a role in preserving the stability of 45S rDNA repeats. The chain is Regulator of telomere elongation helicase 1 homolog from Arabidopsis thaliana (Mouse-ear cress).